The following is a 216-amino-acid chain: GTP cyclohydrolase 1 (216 aa).

Positions 109, 112, and 180 each coordinate Zn(2+).

This sequence belongs to the GTP cyclohydrolase I family. As to quaternary structure, toroid-shaped homodecamer, composed of two pentamers of five dimers.

The enzyme catalyses GTP + H2O = 7,8-dihydroneopterin 3'-triphosphate + formate + H(+). The protein operates within cofactor biosynthesis; 7,8-dihydroneopterin triphosphate biosynthesis; 7,8-dihydroneopterin triphosphate from GTP: step 1/1. This Wigglesworthia glossinidia brevipalpis protein is GTP cyclohydrolase 1.